The chain runs to 126 residues: Small ribosomal subunit protein eS6 (126 aa).

Belongs to the eukaryotic ribosomal protein eS6 family.

This is Small ribosomal subunit protein eS6 from Nanoarchaeum equitans (strain Kin4-M).